The sequence spans 395 residues: Succinyl-diaminopimelate desuccinylase (395 aa).

His-74 lines the Zn(2+) pocket. Residue Asp-76 is part of the active site. Asp-107 serves as a coordination point for Zn(2+). Catalysis depends on Glu-141, which acts as the Proton acceptor. Residues Glu-142, Glu-170, and His-368 each contribute to the Zn(2+) site.

This sequence belongs to the peptidase M20A family. DapE subfamily. Homodimer. It depends on Zn(2+) as a cofactor. Co(2+) serves as cofactor.

The enzyme catalyses N-succinyl-(2S,6S)-2,6-diaminopimelate + H2O = (2S,6S)-2,6-diaminopimelate + succinate. Its pathway is amino-acid biosynthesis; L-lysine biosynthesis via DAP pathway; LL-2,6-diaminopimelate from (S)-tetrahydrodipicolinate (succinylase route): step 3/3. Its function is as follows. Catalyzes the hydrolysis of N-succinyl-L,L-diaminopimelic acid (SDAP), forming succinate and LL-2,6-diaminopimelate (DAP), an intermediate involved in the bacterial biosynthesis of lysine and meso-diaminopimelic acid, an essential component of bacterial cell walls. The chain is Succinyl-diaminopimelate desuccinylase from Brucella abortus (strain S19).